A 427-amino-acid polypeptide reads, in one-letter code: Glutamate-1-semialdehyde 2,1-aminomutase (427 aa).

At K265 the chain carries N6-(pyridoxal phosphate)lysine.

Belongs to the class-III pyridoxal-phosphate-dependent aminotransferase family. HemL subfamily. Homodimer. Pyridoxal 5'-phosphate serves as cofactor.

Its subcellular location is the cytoplasm. The catalysed reaction is (S)-4-amino-5-oxopentanoate = 5-aminolevulinate. The protein operates within porphyrin-containing compound metabolism; protoporphyrin-IX biosynthesis; 5-aminolevulinate from L-glutamyl-tRNA(Glu): step 2/2. In Burkholderia lata (strain ATCC 17760 / DSM 23089 / LMG 22485 / NCIMB 9086 / R18194 / 383), this protein is Glutamate-1-semialdehyde 2,1-aminomutase.